We begin with the raw amino-acid sequence, 124 residues long: Small ribosomal subunit protein uS12 (124 aa).

Asp89 carries the post-translational modification 3-methylthioaspartic acid.

The protein belongs to the universal ribosomal protein uS12 family. Part of the 30S ribosomal subunit. Contacts proteins S8 and S17. May interact with IF1 in the 30S initiation complex.

With S4 and S5 plays an important role in translational accuracy. Functionally, interacts with and stabilizes bases of the 16S rRNA that are involved in tRNA selection in the A site and with the mRNA backbone. Located at the interface of the 30S and 50S subunits, it traverses the body of the 30S subunit contacting proteins on the other side and probably holding the rRNA structure together. The combined cluster of proteins S8, S12 and S17 appears to hold together the shoulder and platform of the 30S subunit. This chain is Small ribosomal subunit protein uS12, found in Tolumonas auensis (strain DSM 9187 / NBRC 110442 / TA 4).